Consider the following 197-residue polypeptide: UPF0637 protein LEUM_0496 (197 aa).

Belongs to the UPF0637 family.

This chain is UPF0637 protein LEUM_0496, found in Leuconostoc mesenteroides subsp. mesenteroides (strain ATCC 8293 / DSM 20343 / BCRC 11652 / CCM 1803 / JCM 6124 / NCDO 523 / NBRC 100496 / NCIMB 8023 / NCTC 12954 / NRRL B-1118 / 37Y).